A 299-amino-acid polypeptide reads, in one-letter code: Non-homologous end joining protein Ku (299 aa).

The Ku domain occupies 10 to 188 (ISFGLVHIPV…TEAVTDARLT (179 aa)). Disordered regions lie at residues 227-249 (AGEG…SADV) and 261-299 (AGKS…GKAS). Basic and acidic residues predominate over residues 273–283 (AAKDKVADKQS). Residues 284–299 (PKPKRPAVRKKTGKAS) show a composition bias toward basic residues.

This sequence belongs to the prokaryotic Ku family. Homodimer. Interacts with LigD.

In terms of biological role, with LigD forms a non-homologous end joining (NHEJ) DNA repair enzyme, which repairs dsDNA breaks with reduced fidelity. Binds linear dsDNA with 5'- and 3'- overhangs but not closed circular dsDNA nor ssDNA. Recruits and stimulates the ligase activity of LigD. In Pseudomonas syringae pv. tomato (strain ATCC BAA-871 / DC3000), this protein is Non-homologous end joining protein Ku.